The primary structure comprises 628 residues: Dual specificity testis-specific protein kinase 1 (628 aa).

Residues 1–35 (MAGERPPLRGPGPGETPVEGPGGAGGGPGRGRPSS) form a disordered region. A compositionally biased stretch (gly residues) spans 20–30 (GPGGAGGGPGR). A Protein kinase domain is found at 52–310 (FDCAEKIGAG…EITQHLEQIL (259 aa)). ATP-binding positions include 58 to 66 (IGAGFFSEV) and Lys81. The active-site Proton acceptor is Asp170. A Phosphoserine; by autocatalysis modification is found at Ser215. Disordered regions lie at residues 330–376 (TYNQ…DNLT), 424–490 (PESL…QLPL), and 538–568 (RAQHSLPRAAALERTEPSPPPSAPREQEEGL). An Omega-N-methylarginine modification is found at Arg338. Over residues 348-357 (SDPRLSRSRS) the composition is skewed to basic and acidic residues. Residues 421–526 (VASPESLVQP…NNNPPAVVVN (106 aa)) are required for interaction with YWHAB. Ser439 bears the Phosphoserine mark. Residues 478-487 (EPEPPGPAPQ) show a composition bias toward pro residues. The tract at residues 529–626 (QGWAREPWNR…PTPSLQLPGA (98 aa)) is required for interaction with PARVA. Positions 529–628 (QGWAREPWNR…PSLQLPGARS (100 aa)) are required for interaction with SPRED1 and SPRY2. Required for TESK1-mediated dephosphorylation of SPRY2 and SPRY2 inhibition of ERK phosphorylation.

The protein belongs to the protein kinase superfamily. TKL Ser/Thr protein kinase family. As to quaternary structure, interacts (via both C- and N-termini) with SPRY4 (via C-terminus); the interaction inhibits TESK1 kinase activity. Interacts with TAOK1; the interaction inhibits TAOK1 kinase activity. Interacts (via C-terminus) with SPRED1 (via C-terminus); the interaction inhibits TESK1 kinase activity. Interacts (via C-terminus) with PARVA/PARVIN (via C-terminus); the interaction inhibits TESK1 kinase activity. Interacts with YWHAB/14-3-3 beta; the interaction is dependent on the phosphorylation of TESK1 Ser-439 and inhibits TESK1 kinase activity. Interacts with SPRY1, SPRY3 and SPRED2. Interacts (via C-terminus) with SPRY2 (via C-terminus); the interaction disrupts SPRY2 interaction with PPP2CA/PP2A-C, possibly by vesicular sequestration of SPRY2. Therefore dephosphorylation of SPRY2 by the serine/threonine-protein phosphatase 2A (PP2A) holoenzyme is lost, inhibiting its interaction with GRB2. Mg(2+) serves as cofactor. The cofactor is Mn(2+). Post-translationally, autophosphorylated on serine and tyrosine residues. In terms of tissue distribution, weakly expressed in sciatic nerves (at protein level). Highly expressed in testicular germ cells. Expressed at low levels in brain, lung, heart, liver and kidney.

The protein localises to the cytoplasm. It localises to the perinuclear region. It is found in the cytoskeleton. Its subcellular location is the microtubule organizing center. The protein resides in the centrosome. The protein localises to the cell projection. It localises to the lamellipodium. The enzyme catalyses L-seryl-[protein] + ATP = O-phospho-L-seryl-[protein] + ADP + H(+). It catalyses the reaction L-threonyl-[protein] + ATP = O-phospho-L-threonyl-[protein] + ADP + H(+). It carries out the reaction L-tyrosyl-[protein] + ATP = O-phospho-L-tyrosyl-[protein] + ADP + H(+). With respect to regulation, activated by autophosphorylation on Ser-215. Kinase activity is inhibited by SPRED1. In terms of biological role, dual specificity protein kinase activity catalyzing autophosphorylation and phosphorylation of exogenous substrates on both serine/threonine and tyrosine residues. Regulates the cellular cytoskeleton by enhancing actin stress fiber formation via phosphorylation of cofilin and by preventing microtubule breakdown via inhibition of TAOK1/MARKK kinase activity. Inhibits podocyte motility via regulation of actin cytoskeletal dynamics and phosphorylation of CFL1. Positively regulates integrin-mediated cell spreading, via phosphorylation of cofilin. Suppresses ciliogenesis via multiple pathways; phosphorylation of CFL1, suppression of ciliary vesicle directional trafficking to the ciliary base, and by facilitating YAP1 nuclear localization where it acts as a transcriptional corepressor of the TEAD4 target genes AURKA and PLK1. Probably plays a central role at and after the meiotic phase of spermatogenesis. In Rattus norvegicus (Rat), this protein is Dual specificity testis-specific protein kinase 1 (Tesk1).